We begin with the raw amino-acid sequence, 117 residues long: Large ribosomal subunit protein uL18 (117 aa).

This sequence belongs to the universal ribosomal protein uL18 family. Part of the 50S ribosomal subunit; part of the 5S rRNA/L5/L18/L25 subcomplex. Contacts the 5S and 23S rRNAs.

In terms of biological role, this is one of the proteins that bind and probably mediate the attachment of the 5S RNA into the large ribosomal subunit, where it forms part of the central protuberance. This is Large ribosomal subunit protein uL18 from Klebsiella pneumoniae subsp. pneumoniae (strain ATCC 700721 / MGH 78578).